We begin with the raw amino-acid sequence, 100 residues long: NADH-quinone oxidoreductase subunit K (100 aa).

3 helical membrane passes run 4–24 (LQHG…CLVL), 28–48 (LLFM…AFVV), and 60–80 (IMYI…LALL).

This sequence belongs to the complex I subunit 4L family. In terms of assembly, NDH-1 is composed of 13 different subunits. Subunits NuoA, H, J, K, L, M, N constitute the membrane sector of the complex.

The protein resides in the cell inner membrane. It catalyses the reaction a quinone + NADH + 5 H(+)(in) = a quinol + NAD(+) + 4 H(+)(out). In terms of biological role, NDH-1 shuttles electrons from NADH, via FMN and iron-sulfur (Fe-S) centers, to quinones in the respiratory chain. The immediate electron acceptor for the enzyme in this species is believed to be ubiquinone. Couples the redox reaction to proton translocation (for every two electrons transferred, four hydrogen ions are translocated across the cytoplasmic membrane), and thus conserves the redox energy in a proton gradient. The sequence is that of NADH-quinone oxidoreductase subunit K from Proteus mirabilis (strain HI4320).